The sequence spans 59 residues: Small, acid-soluble spore protein H 2 (59 aa).

It belongs to the SspH family.

The protein resides in the spore core. The chain is Small, acid-soluble spore protein H 2 (sspH2) from Bacillus anthracis.